Here is a 92-residue protein sequence, read N- to C-terminus: Transcription factor S4 (92 aa).

Residues 1 to 31 (MRFCPKCGSFLKVKGNKMVCSKCGYSDHDVE) form a ZR-N region. Zn(2+) contacts are provided by Cys4, Cys7, Cys20, and Cys23. Residues 32–56 (KVILKENVAHENDKTIIADGETIEG) are flexible linker. The segment at 55–92 (EGRVAISLCPRCGSVRAILLNKKKRLYRCMTCNFVYNI) is ZR-C. Residues Cys63 and Cys66 each contribute to the Zn(2+) site. Active-site residues include Lys76, Lys77, and Lys78. Zn(2+)-binding residues include Cys83 and Cys86.

Belongs to the archaeal RpoM/eukaryotic RPA12/RPB9/RPC11 RNA polymerase family. As to quaternary structure, interacts with RNA polymerase. It depends on Zn(2+) as a cofactor.

In terms of biological role, a potent inhibitor of RNA polymerase (RNAP) probably involved in viral defense. Destabilizes the transcription pre-initiation complex of TBP, TFB, DNA and RNAP, inhibits abortive transcription initiation, productive initiation and transcription elongation. Increases the RNAP KM for NTPs about 50-fold. Overexpression of TFS1-tip4 (TFS1 with the active tip of this protein, phenocopies this protein) in S.acidocaldarius MW001 leads to severe growth inhibition. When bound to RNAP induces conformational changes that widen the DNA-binding channel, probably destabilizing the interaction of DNA with RNAP. This chain is Transcription factor S4, found in Saccharolobus solfataricus (strain ATCC 35092 / DSM 1617 / JCM 11322 / P2) (Sulfolobus solfataricus).